A 968-amino-acid polypeptide reads, in one-letter code: MPFALGQRWISDTESELGLGTVVQVEGRMVTVLFPATGENRMFSRAEAPLTRVIYNPGDSVESHEGWSLAVSELTEKDGIVIYHGIHSETGEQVTLRETLLNHNIRFNKPQDRLFAGQIDRLDRFGVRYQCQMLRHKLASSDLLGLQGPRVGLIPHQMWIAHEVGRRYAPRVLLADEVGLGKTIEAGLIIHQQLLTGRAERILIIVPDTLRHQWLVEMLRRFNLRFSVFDEDRCVEAYADHDNPFYTEQLVICSLELLRKKKRLDQALDADWDLLVVDEAHHLEWTEEAPSRAYQVVEALSEVIPGVLLLTATPDQLGHESHFARLRLLDPDRFYDYDAFLAEEDSYKDVAIAAEALAGNAKLPDAAINSLTELLGEKDISPSIRLIQAEGIDAEVQQAARSELLQELLDRHGTGRVLYRNSRASVKGFPKRFFNAYPHAMPDQYQTAARVSGMMGGHKSLEAKAAQALSPEKLYQEFEDNSASWWKFDPRVDWLIEFLKSHRSKKVLIIASQAETALSLEEALRTREGIQATVFHEGMSIIERDKAGAYFAQEEGGAQALICSEIGSEGRNFQFASHLVLFDLPLNPDLLEQRIGRLDRIGQKNDIQIHLPYLEDTAQERLMKWYHQGLNAFELTCPSGHVLYSEFAEDLLNVLVVDDSDELTNLLNHTQSRYKELKHTMEQGRDKLLEINSHGGEKAMAIVQRLAQNDGDTHLIGSVIRLWDIIGVDQEDKGENSIILRPSEHMMFPTYPGLPEDGVTVTFDRDTALSRDDIALITQEHPLVQTGLDLITGSETGTTSVAILKNKALPAGTLFLELIYMADASAPKSSQLYRYLPPTPIRVLLDKNGNDLSAKVDYASFDKQLSAVNRHIGGKLVTASQPILHPLFAKGEEYAQVVVDEMVAQAREKMTQQLSAELSRLESLKAVNPNIREEELEYLRNQMQELNTYLDASQLQLDAIRMVLVSHV.

Residues 163–332 (EVGRRYAPRV…FARLRLLDPD (170 aa)) form the Helicase ATP-binding domain. Position 176–183 (176–183 (DEVGLGKT)) interacts with ATP. Residues 278 to 281 (DEAH) carry the DEAH box motif. Residues 491 to 641 (RVDWLIEFLK…AFELTCPSGH (151 aa)) form the Helicase C-terminal domain.

It belongs to the SNF2/RAD54 helicase family. RapA subfamily. In terms of assembly, interacts with the RNAP. Has a higher affinity for the core RNAP than for the holoenzyme. Its ATPase activity is stimulated by binding to RNAP.

Transcription regulator that activates transcription by stimulating RNA polymerase (RNAP) recycling in case of stress conditions such as supercoiled DNA or high salt concentrations. Probably acts by releasing the RNAP, when it is trapped or immobilized on tightly supercoiled DNA. Does not activate transcription on linear DNA. Probably not involved in DNA repair. This Shewanella baltica (strain OS185) protein is RNA polymerase-associated protein RapA.